A 173-amino-acid polypeptide reads, in one-letter code: Adenine phosphoribosyltransferase (173 aa).

This sequence belongs to the purine/pyrimidine phosphoribosyltransferase family. In terms of assembly, homodimer.

It localises to the cytoplasm. The enzyme catalyses AMP + diphosphate = 5-phospho-alpha-D-ribose 1-diphosphate + adenine. The protein operates within purine metabolism; AMP biosynthesis via salvage pathway; AMP from adenine: step 1/1. Functionally, catalyzes a salvage reaction resulting in the formation of AMP, that is energically less costly than de novo synthesis. This Caldanaerobacter subterraneus subsp. tengcongensis (strain DSM 15242 / JCM 11007 / NBRC 100824 / MB4) (Thermoanaerobacter tengcongensis) protein is Adenine phosphoribosyltransferase.